Reading from the N-terminus, the 736-residue chain is Poly(A) polymerase gamma (736 aa).

N6-acetyllysine is present on Lys2. 2 positions are modified to phosphoserine: Ser23 and Ser29. ATP contacts are provided by residues 99 to 101 (FGS), Thr108, 112 to 114 (DID), Asp166, Lys227, Tyr236, and 245 to 246 (GV). Mg(2+) is bound by residues Asp112, Asp114, and Asp166. A disordered region spans residues 506–564 (KQSLSDVNRSSGGLQSKRLSLDSSCLDSSRDTDNGTPFNSPASKSDSPSVGETERNSAE). Residues 509 to 519 (LSDVNRSSGGL) show a composition bias toward polar residues. The segment covering 521–532 (SKRLSLDSSCLD) has biased composition (low complexity). Residue Ser525 is modified to Phosphoserine. Residues 539–555 (NGTPFNSPASKSDSPSV) show a composition bias toward polar residues. Phosphoserine is present on residues Ser599 and Ser648. The residue at position 654 (Thr654) is a Phosphothreonine. Basic and acidic residues predominate over residues 673–685 (DPRTAEERKRKSV). Residues 673 to 720 (DPRTAEERKRKSVDAIGGESMPIPTIDTSRKKRLPSKELPDSSSPVPA) are disordered. 2 positions are modified to phosphoserine: Ser684 and Ser708.

The protein belongs to the poly(A) polymerase family. Mg(2+) serves as cofactor. The cofactor is Mn(2+). In terms of tissue distribution, expressed predominantly in testis, and weakly in other tissues. Overexpressed in several tumors.

The protein localises to the nucleus. The catalysed reaction is RNA(n) + ATP = RNA(n)-3'-adenine ribonucleotide + diphosphate. In terms of biological role, responsible for the post-transcriptional adenylation of the 3'-terminal of mRNA precursors and several small RNAs including signal recognition particle (SRP) RNA, nuclear 7SK RNA, U2 small nuclear RNA, and ribosomal 5S RNA. This is Poly(A) polymerase gamma from Homo sapiens (Human).